A 455-amino-acid polypeptide reads, in one-letter code: GTPase Der (455 aa).

EngA-type G domains are found at residues 4 to 169 (PIVA…PPKH) and 178 to 353 (IQMA…EQHR). GTP-binding positions include 10–17 (GRPNVGKS), 57–61 (DTGGL), 120–123 (NKCE), 184–191 (GRPNVGKS), 231–235 (DTAGI), and 296–299 (NKWD). A KH-like domain is found at 354–439 (RRVSTSVVNE…PLKLFWRGKQ (86 aa)).

This sequence belongs to the TRAFAC class TrmE-Era-EngA-EngB-Septin-like GTPase superfamily. EngA (Der) GTPase family. Associates with the 50S ribosomal subunit.

Its function is as follows. GTPase that plays an essential role in the late steps of ribosome biogenesis. This chain is GTPase Der, found in Prochlorococcus marinus (strain MIT 9313).